The sequence spans 495 residues: Probable cytosol aminopeptidase (495 aa).

The Mn(2+) site is built by K258 and D263. Residue K270 is part of the active site. Positions 281, 340, and 342 each coordinate Mn(2+). The active site involves R344.

The protein belongs to the peptidase M17 family. Mn(2+) serves as cofactor.

The protein localises to the cytoplasm. The enzyme catalyses Release of an N-terminal amino acid, Xaa-|-Yaa-, in which Xaa is preferably Leu, but may be other amino acids including Pro although not Arg or Lys, and Yaa may be Pro. Amino acid amides and methyl esters are also readily hydrolyzed, but rates on arylamides are exceedingly low.. The catalysed reaction is Release of an N-terminal amino acid, preferentially leucine, but not glutamic or aspartic acids.. Its function is as follows. Presumably involved in the processing and regular turnover of intracellular proteins. Catalyzes the removal of unsubstituted N-terminal amino acids from various peptides. The chain is Probable cytosol aminopeptidase from Leptospira interrogans serogroup Icterohaemorrhagiae serovar copenhageni (strain Fiocruz L1-130).